The primary structure comprises 115 residues: MTGPARSGAAIRGAGRTVARGLIFLIQLYRHMVSPLRPATCRFVPTCSQYAVDALDEYGLIRGSWLAAARLTKCGPWHQGGWDPIPERPGCRVNCQDASDAWAVRATRGESGSLV.

The protein belongs to the UPF0161 family.

Its subcellular location is the cell membrane. Functionally, could be involved in insertion of integral membrane proteins into the membrane. This Mycobacterium avium (strain 104) protein is Putative membrane protein insertion efficiency factor.